The primary structure comprises 155 residues: SsrA-binding protein (155 aa).

It belongs to the SmpB family.

It is found in the cytoplasm. Functionally, required for rescue of stalled ribosomes mediated by trans-translation. Binds to transfer-messenger RNA (tmRNA), required for stable association of tmRNA with ribosomes. tmRNA and SmpB together mimic tRNA shape, replacing the anticodon stem-loop with SmpB. tmRNA is encoded by the ssrA gene; the 2 termini fold to resemble tRNA(Ala) and it encodes a 'tag peptide', a short internal open reading frame. During trans-translation Ala-aminoacylated tmRNA acts like a tRNA, entering the A-site of stalled ribosomes, displacing the stalled mRNA. The ribosome then switches to translate the ORF on the tmRNA; the nascent peptide is terminated with the 'tag peptide' encoded by the tmRNA and targeted for degradation. The ribosome is freed to recommence translation, which seems to be the essential function of trans-translation. The polypeptide is SsrA-binding protein (Streptococcus pneumoniae serotype 4 (strain ATCC BAA-334 / TIGR4)).